A 279-amino-acid polypeptide reads, in one-letter code: Phosphatidylglycerol--prolipoprotein diacylglyceryl transferase (279 aa).

Helical transmembrane passes span 18 to 38 (LSVR…YFVA), 55 to 75 (IIFY…VIFQ), and 89 to 109 (IWHG…AGVI). R137 contacts a 1,2-diacyl-sn-glycero-3-phospho-(1'-sn-glycerol). 2 helical membrane-spanning segments follow: residues 203–223 (LGET…FIEG) and 235–255 (IRVA…LIVY).

The protein belongs to the Lgt family.

Its subcellular location is the cell membrane. It carries out the reaction L-cysteinyl-[prolipoprotein] + a 1,2-diacyl-sn-glycero-3-phospho-(1'-sn-glycerol) = an S-1,2-diacyl-sn-glyceryl-L-cysteinyl-[prolipoprotein] + sn-glycerol 1-phosphate + H(+). It functions in the pathway protein modification; lipoprotein biosynthesis (diacylglyceryl transfer). Functionally, catalyzes the transfer of the diacylglyceryl group from phosphatidylglycerol to the sulfhydryl group of the N-terminal cysteine of a prolipoprotein, the first step in the formation of mature lipoproteins. This chain is Phosphatidylglycerol--prolipoprotein diacylglyceryl transferase, found in Staphylococcus aureus (strain MSSA476).